The following is a 944-amino-acid chain: Bifunctional glutamine synthetase adenylyltransferase/adenylyl-removing enzyme (944 aa).

Residues 1–440 (MSANSVFQQL…IFTQLIGEDD (440 aa)) are adenylyl removase. The segment at 448–944 (VSEFKRLWLL…LSSKQKWLDE (497 aa)) is adenylyl transferase.

The protein belongs to the GlnE family. It depends on Mg(2+) as a cofactor.

The enzyme catalyses [glutamine synthetase]-O(4)-(5'-adenylyl)-L-tyrosine + phosphate = [glutamine synthetase]-L-tyrosine + ADP. The catalysed reaction is [glutamine synthetase]-L-tyrosine + ATP = [glutamine synthetase]-O(4)-(5'-adenylyl)-L-tyrosine + diphosphate. Involved in the regulation of glutamine synthetase GlnA, a key enzyme in the process to assimilate ammonia. When cellular nitrogen levels are high, the C-terminal adenylyl transferase (AT) inactivates GlnA by covalent transfer of an adenylyl group from ATP to specific tyrosine residue of GlnA, thus reducing its activity. Conversely, when nitrogen levels are low, the N-terminal adenylyl removase (AR) activates GlnA by removing the adenylyl group by phosphorolysis, increasing its activity. The regulatory region of GlnE binds the signal transduction protein PII (GlnB) which indicates the nitrogen status of the cell. The chain is Bifunctional glutamine synthetase adenylyltransferase/adenylyl-removing enzyme from Proteus mirabilis (strain HI4320).